A 429-amino-acid chain; its full sequence is Serine hydroxymethyltransferase (429 aa).

(6S)-5,6,7,8-tetrahydrofolate contacts are provided by residues Leu126 and 130 to 132; that span reads GHL. Lys235 carries the post-translational modification N6-(pyridoxal phosphate)lysine. Residue 359-361 participates in (6S)-5,6,7,8-tetrahydrofolate binding; the sequence is SPF.

It belongs to the SHMT family. Homodimer. It depends on pyridoxal 5'-phosphate as a cofactor.

The protein resides in the cytoplasm. It carries out the reaction (6R)-5,10-methylene-5,6,7,8-tetrahydrofolate + glycine + H2O = (6S)-5,6,7,8-tetrahydrofolate + L-serine. It participates in one-carbon metabolism; tetrahydrofolate interconversion. The protein operates within amino-acid biosynthesis; glycine biosynthesis; glycine from L-serine: step 1/1. Its function is as follows. Catalyzes the reversible interconversion of serine and glycine with tetrahydrofolate (THF) serving as the one-carbon carrier. This reaction serves as the major source of one-carbon groups required for the biosynthesis of purines, thymidylate, methionine, and other important biomolecules. Also exhibits THF-independent aldolase activity toward beta-hydroxyamino acids, producing glycine and aldehydes, via a retro-aldol mechanism. The chain is Serine hydroxymethyltransferase from Parasynechococcus marenigrum (strain WH8102).